The chain runs to 350 residues: NADH-quinone oxidoreductase subunit H (350 aa).

8 helical membrane-spanning segments follow: residues 5–25 (FIIE…IMAM), 76–96 (FLFV…SAVI), 118–138 (IALL…MIGG), 162–182 (IAMG…SLKV), 190–210 (MNWN…CSFA), 243–263 (LFAE…LFFG), 284–304 (LLGI…YMWV), and 319–339 (LGWR…GAVI).

Belongs to the complex I subunit 1 family. As to quaternary structure, NDH-1 is composed of 14 different subunits. Subunits NuoA, H, J, K, L, M, N constitute the membrane sector of the complex.

Its subcellular location is the cell inner membrane. The catalysed reaction is a quinone + NADH + 5 H(+)(in) = a quinol + NAD(+) + 4 H(+)(out). Its function is as follows. NDH-1 shuttles electrons from NADH, via FMN and iron-sulfur (Fe-S) centers, to quinones in the respiratory chain. The immediate electron acceptor for the enzyme in this species is believed to be ubiquinone. Couples the redox reaction to proton translocation (for every two electrons transferred, four hydrogen ions are translocated across the cytoplasmic membrane), and thus conserves the redox energy in a proton gradient. This subunit may bind ubiquinone. This is NADH-quinone oxidoreductase subunit H from Flavobacterium johnsoniae (strain ATCC 17061 / DSM 2064 / JCM 8514 / BCRC 14874 / CCUG 350202 / NBRC 14942 / NCIMB 11054 / UW101) (Cytophaga johnsonae).